The following is a 400-amino-acid chain: Methylamine dehydrogenase heavy chain (400 aa).

Residues 1 to 27 (MTTFQPGRLAGQLAATALLAATCSAFA) form the signal peptide.

This sequence belongs to the aromatic amine dehydrogenase heavy chain family. Tetramer of two light and two heavy chains.

It localises to the periplasm. It catalyses the reaction 2 oxidized [amicyanin] + methylamine + H2O = 2 reduced [amicyanin] + formaldehyde + NH4(+) + 2 H(+). Methylamine dehydrogenase carries out the oxidation of methylamine. Electrons are passed from methylamine dehydrogenase to amicyanin. The chain is Methylamine dehydrogenase heavy chain (mauB) from Methylobacillus flagellatus (strain ATCC 51484 / DSM 6875 / VKM B-1610 / KT).